The following is a 271-amino-acid chain: Plasmanylethanolamine desaturase 1 (271 aa).

3 consecutive transmembrane segments (helical) span residues 48 to 68, 75 to 95, and 162 to 182; these read WCCV…LLLL, PLVM…SGLV, and VLEQ…FGTF. Residues 187–191 carry the Histidine box-1 motif; it reads HKWSH. Positions 214 to 218 match the Histidine box-2 motif; that stretch reads HHRIH.

The protein belongs to the fatty acid desaturase CarF family.

It is found in the endoplasmic reticulum membrane. The catalysed reaction is a 1-(1,2-saturated alkyl)-2-acyl-sn-glycero-3-phosphoethanolamine + 2 Fe(II)-[cytochrome b5] + O2 + 2 H(+) = a 1-O-(1Z-alkenyl)-2-acyl-sn-glycero-3-phosphoethanolamine + 2 Fe(III)-[cytochrome b5] + 2 H2O. The enzyme catalyses a 1-O-hexadecyl-2-acyl-sn-glycero-3-phosphoethanolamine + 2 Fe(II)-[cytochrome b5] + O2 + 2 H(+) = a 1-O-(1Z-hexadecenyl)-2-acyl-sn-glycero-3-phosphoethanolamine + 2 Fe(III)-[cytochrome b5] + 2 H2O. It carries out the reaction a 1-O-octadecyl-2-acyl-sn-glycero-3-phosphoethanolamine + 2 Fe(II)-[cytochrome b5] + O2 + 2 H(+) = a 1-O-(1Z-octadecenyl)-2-acyl-sn-glycero-3-phosphoethanolamine + 2 Fe(III)-[cytochrome b5] + 2 H2O. It catalyses the reaction a 1-O-(9Z-octadecenyl)-2-acyl-sn-glycero-3-phosphoethanolamine + 2 Fe(II)-[cytochrome b5] + O2 + 2 H(+) = a 1-O-(1Z,9Z-octadecadienyl)-2-acyl-sn-glycero-3-phosphoethanolamine + 2 Fe(III)-[cytochrome b5] + 2 H2O. The protein operates within lipid metabolism; fatty acid metabolism. Plasmanylethanolamine desaturase involved in plasmalogen biogenesis in the endoplasmic reticulum membrane. Plasmalogens are glycerophospholipids with a hydrocarbon chain linked by a vinyl ether bond at the glycerol sn-1 position, and are involved in antioxidative and signaling mechanisms. The protein is Plasmanylethanolamine desaturase 1 of Bos taurus (Bovine).